Here is a 955-residue protein sequence, read N- to C-terminus: Glycine dehydrogenase (decarboxylating) (955 aa).

An N6-(pyridoxal phosphate)lysine modification is found at lysine 705.

This sequence belongs to the GcvP family. As to quaternary structure, the glycine cleavage system is composed of four proteins: P, T, L and H. Pyridoxal 5'-phosphate serves as cofactor.

The catalysed reaction is N(6)-[(R)-lipoyl]-L-lysyl-[glycine-cleavage complex H protein] + glycine + H(+) = N(6)-[(R)-S(8)-aminomethyldihydrolipoyl]-L-lysyl-[glycine-cleavage complex H protein] + CO2. Its function is as follows. The glycine cleavage system catalyzes the degradation of glycine. The P protein binds the alpha-amino group of glycine through its pyridoxal phosphate cofactor; CO(2) is released and the remaining methylamine moiety is then transferred to the lipoamide cofactor of the H protein. This Aliivibrio fischeri (strain ATCC 700601 / ES114) (Vibrio fischeri) protein is Glycine dehydrogenase (decarboxylating).